A 282-amino-acid polypeptide reads, in one-letter code: Aquaporin NIP1-1 (282 aa).

The next 2 helical transmembrane spans lie at 46-66 (IIAE…AVTI) and 74-94 (ITFP…VYAV). Positions 103 to 105 (NPA) match the NPA 1 motif. 3 helical membrane passes run 125 to 145 (VLAQ…MFGG), 162 to 182 (SLVI…GVAT), and 186 to 206 (AIGE…VLIA). The NPA 2 motif lies at 215-217 (NPA). The helical transmembrane segment at 232-252 (IWVYVVGPVVGAVAGAWAYNL) threads the bilayer.

Belongs to the MIP/aquaporin (TC 1.A.8) family. NIP (TC 1.A.8.12) subfamily.

It localises to the membrane. In terms of biological role, aquaporins facilitate the transport of water and small neutral solutes across cell membranes. The protein is Aquaporin NIP1-1 (NIP1-1) of Zea mays (Maize).